The sequence spans 480 residues: Aspartyl/glutamyl-tRNA(Asn/Gln) amidotransferase subunit B (480 aa).

This sequence belongs to the GatB/GatE family. GatB subfamily. As to quaternary structure, heterotrimer of A, B and C subunits.

It carries out the reaction L-glutamyl-tRNA(Gln) + L-glutamine + ATP + H2O = L-glutaminyl-tRNA(Gln) + L-glutamate + ADP + phosphate + H(+). The catalysed reaction is L-aspartyl-tRNA(Asn) + L-glutamine + ATP + H2O = L-asparaginyl-tRNA(Asn) + L-glutamate + ADP + phosphate + 2 H(+). Its function is as follows. Allows the formation of correctly charged Asn-tRNA(Asn) or Gln-tRNA(Gln) through the transamidation of misacylated Asp-tRNA(Asn) or Glu-tRNA(Gln) in organisms which lack either or both of asparaginyl-tRNA or glutaminyl-tRNA synthetases. The reaction takes place in the presence of glutamine and ATP through an activated phospho-Asp-tRNA(Asn) or phospho-Glu-tRNA(Gln). This Streptococcus pneumoniae serotype 2 (strain D39 / NCTC 7466) protein is Aspartyl/glutamyl-tRNA(Asn/Gln) amidotransferase subunit B.